The primary structure comprises 253 residues: Imidazole glycerol phosphate synthase subunit HisF (253 aa).

Residues Asp11 and Asp130 contribute to the active site.

This sequence belongs to the HisA/HisF family. In terms of assembly, heterodimer of HisH and HisF.

The protein localises to the cytoplasm. It catalyses the reaction 5-[(5-phospho-1-deoxy-D-ribulos-1-ylimino)methylamino]-1-(5-phospho-beta-D-ribosyl)imidazole-4-carboxamide + L-glutamine = D-erythro-1-(imidazol-4-yl)glycerol 3-phosphate + 5-amino-1-(5-phospho-beta-D-ribosyl)imidazole-4-carboxamide + L-glutamate + H(+). It functions in the pathway amino-acid biosynthesis; L-histidine biosynthesis; L-histidine from 5-phospho-alpha-D-ribose 1-diphosphate: step 5/9. IGPS catalyzes the conversion of PRFAR and glutamine to IGP, AICAR and glutamate. The HisF subunit catalyzes the cyclization activity that produces IGP and AICAR from PRFAR using the ammonia provided by the HisH subunit. The chain is Imidazole glycerol phosphate synthase subunit HisF from Dehalococcoides mccartyi (strain ATCC BAA-2266 / KCTC 15142 / 195) (Dehalococcoides ethenogenes (strain 195)).